We begin with the raw amino-acid sequence, 736 residues long: Acyl-coenzyme A oxidase (736 aa).

Belongs to the acyl-CoA oxidase family. It depends on FAD as a cofactor.

It localises to the peroxisome. The catalysed reaction is a 2,3-saturated acyl-CoA + O2 = a (2E)-enoyl-CoA + H2O2. It functions in the pathway lipid metabolism; peroxisomal fatty acid beta-oxidation. This chain is Acyl-coenzyme A oxidase (POX1), found in Kluyveromyces lactis (strain ATCC 8585 / CBS 2359 / DSM 70799 / NBRC 1267 / NRRL Y-1140 / WM37) (Yeast).